A 598-amino-acid polypeptide reads, in one-letter code: Beta-hexosaminidase A (598 aa).

The N-terminal stretch at 1 to 11 is a signal peptide; that stretch reads MSFITSAHATA. Residue Asp-305 is part of the active site.

Belongs to the glycosyl hydrolase 3 family.

The enzyme catalyses Hydrolysis of terminal non-reducing N-acetyl-D-hexosamine residues in N-acetyl-beta-D-hexosaminides.. In terms of biological role, most active towards p-nitrophenyl-N-acetyl-beta-D-glucosaminide(PNP-beta-GlcNAc) and diacetylchitobiose. The sequence is that of Beta-hexosaminidase A (cht60) from Pseudoalteromonas piscicida.